A 692-amino-acid chain; its full sequence is Serine/threonine-protein kinase Nek8 (692 aa).

A Protein kinase domain is found at tyrosine 4–cysteine 258. ATP is bound by residues valine 10–valine 18 and lysine 33. Aspartate 128 serves as the catalytic Proton acceptor. Threonine 162 carries the post-translational modification Phosphothreonine; by autocatalysis. Positions alanine 277–glycine 301 are disordered. Polar residues predominate over residues alanine 282–valine 293. RCC1 repeat units follow at residues serine 312–serine 350, glycine 410–glutamate 461, arginine 462–proline 513, glycine 580–glutamate 631, and serine 632–serine 684.

It belongs to the protein kinase superfamily. NEK Ser/Thr protein kinase family. NIMA subfamily. Interacts with PKD2; may regulate PKD2 targeting to the cilium. Interacts with ANKS6. Component of a complex containing at least ANKS6, INVS, NEK8 and NPHP3. ANKS6 may organize complex assembly by linking INVS and NPHP3 to NEK8 and INVS may target the complex to the proximal ciliary axoneme. Interacts with ANKS3. Requires Mg(2+) as cofactor. Highest expression in thyroid, adrenal gland and skin. Low levels in spleen, colon and uterus. Overexpressed in breast tumors, with highest expression in infiltrating ductal carcinomas and moderate levels in mucinous adenocarcinoma.

It localises to the cytoplasm. Its subcellular location is the cytoskeleton. The protein localises to the cell projection. It is found in the cilium. The protein resides in the microtubule organizing center. It localises to the centrosome. Its subcellular location is the cilium axoneme. It catalyses the reaction L-seryl-[protein] + ATP = O-phospho-L-seryl-[protein] + ADP + H(+). It carries out the reaction L-threonyl-[protein] + ATP = O-phospho-L-threonyl-[protein] + ADP + H(+). Its function is as follows. Required for renal tubular integrity. May regulate local cytoskeletal structure in kidney tubule epithelial cells. May regulate ciliary biogenesis through targeting of proteins to the cilia. Plays a role in organogenesis, and is involved in the regulation of the Hippo signaling pathway. This chain is Serine/threonine-protein kinase Nek8 (NEK8), found in Homo sapiens (Human).